A 109-amino-acid polypeptide reads, in one-letter code: Parvalbumin beta-1 (109 aa).

Residue S2 is modified to N-acetylserine. EF-hand domains are found at residues 39–74 (KSHE…FGAG) and 78–109 (LTAA…LVKA). Residues D52, D54, S56, F58, E60, E63, D91, D93, D95, M97, and E102 each coordinate Ca(2+).

The protein belongs to the parvalbumin family.

In terms of biological role, in muscle, parvalbumin is thought to be involved in relaxation after contraction. It binds two calcium ions. This Gadus chalcogrammus (Alaska pollock) protein is Parvalbumin beta-1.